Here is a 440-residue protein sequence, read N- to C-terminus: Deoxyguanosinetriphosphate triphosphohydrolase-like protein (440 aa).

An HD domain is found at 62 to 255 (RLTHSLEAAQ…MELADDIAYG (194 aa)).

This sequence belongs to the dGTPase family. Type 2 subfamily.

The polypeptide is Deoxyguanosinetriphosphate triphosphohydrolase-like protein (Vibrio parahaemolyticus serotype O3:K6 (strain RIMD 2210633)).